Here is a 230-residue protein sequence, read N- to C-terminus: Demethylmenaquinone methyltransferase (230 aa).

S-adenosyl-L-methionine is bound by residues threonine 57, aspartate 77, 101–102, and serine 118; that span reads DI.

Belongs to the class I-like SAM-binding methyltransferase superfamily. MenG/UbiE family.

It catalyses the reaction a 2-demethylmenaquinol + S-adenosyl-L-methionine = a menaquinol + S-adenosyl-L-homocysteine + H(+). The protein operates within quinol/quinone metabolism; menaquinone biosynthesis; menaquinol from 1,4-dihydroxy-2-naphthoate: step 2/2. Functionally, methyltransferase required for the conversion of demethylmenaquinol (DMKH2) to menaquinol (MKH2). The protein is Demethylmenaquinone methyltransferase of Chlamydia felis (strain Fe/C-56) (Chlamydophila felis).